Here is a 279-residue protein sequence, read N- to C-terminus: UTP--glucose-1-phosphate uridylyltransferase (279 aa).

It belongs to the UDPGP type 2 family.

The enzyme catalyses alpha-D-glucose 1-phosphate + UTP + H(+) = UDP-alpha-D-glucose + diphosphate. In terms of biological role, may play a role in stationary phase survival. This Pseudomonas aeruginosa protein is UTP--glucose-1-phosphate uridylyltransferase (galU).